The primary structure comprises 144 residues: Large ribosomal subunit protein uL15 (144 aa).

The segment at 1–51 (MKLNELKPATGSRSKRLRKGRGLSSGHGFTSGRGTKGQKAHGKTRLGFEGG) is disordered. Gly residues predominate over residues 23–35 (LSSGHGFTSGRGT).

Belongs to the universal ribosomal protein uL15 family. In terms of assembly, part of the 50S ribosomal subunit.

In terms of biological role, binds to the 23S rRNA. The chain is Large ribosomal subunit protein uL15 from Limosilactobacillus reuteri (strain DSM 20016) (Lactobacillus reuteri).